The chain runs to 444 residues: Transcription activator AKTR-1 (444 aa).

The zn(2)-C6 fungal-type DNA-binding region spans 16 to 43; the sequence is CDFCTQSKLRCNKNKPSCRRCTIQQQPC. Residues 49–87 form a disordered region; the sequence is RRTGRPPKHPRKANDCQEANGQHGEQDPVTSTPGGSCQQ. Positions 50-59 are enriched in basic residues; the sequence is RTGRPPKHPR. Positions 76–87 are enriched in polar residues; sequence PVTSTPGGSCQQ.

It is found in the nucleus. In terms of biological role, transcription factor that regulates the expression of the gene clusters that mediate the biosynthesis of the host-selective toxins (HSTs) AK-toxins responsible for Japanese pear black spot disease by the Japanese pear pathotype. AK-toxins are esters of 9,10-epoxy 8-hydroxy 9-methyldecatrienoic acid (EDA). On cellular level, AK-toxins affect plasma membrane of susceptible cells and cause a sudden increase in loss of K(+) after a few minutes of toxin treatment. This Alternaria alternata (Alternaria rot fungus) protein is Transcription activator AKTR-1.